We begin with the raw amino-acid sequence, 159 residues long: Ribosomal RNA large subunit methyltransferase H (159 aa).

S-adenosyl-L-methionine-binding positions include leucine 76, glycine 108, and 127–132 (FGLLTL).

The protein belongs to the RNA methyltransferase RlmH family. As to quaternary structure, homodimer.

It is found in the cytoplasm. It carries out the reaction pseudouridine(1915) in 23S rRNA + S-adenosyl-L-methionine = N(3)-methylpseudouridine(1915) in 23S rRNA + S-adenosyl-L-homocysteine + H(+). Its function is as follows. Specifically methylates the pseudouridine at position 1915 (m3Psi1915) in 23S rRNA. The polypeptide is Ribosomal RNA large subunit methyltransferase H (Leuconostoc citreum (strain KM20)).